We begin with the raw amino-acid sequence, 425 residues long: Glutamate-1-semialdehyde 2,1-aminomutase (425 aa).

Lysine 265 is subject to N6-(pyridoxal phosphate)lysine.

It belongs to the class-III pyridoxal-phosphate-dependent aminotransferase family. HemL subfamily. In terms of assembly, homodimer. Pyridoxal 5'-phosphate serves as cofactor.

It is found in the cytoplasm. It carries out the reaction (S)-4-amino-5-oxopentanoate = 5-aminolevulinate. Its pathway is porphyrin-containing compound metabolism; protoporphyrin-IX biosynthesis; 5-aminolevulinate from L-glutamyl-tRNA(Glu): step 2/2. This Clostridium perfringens (strain 13 / Type A) protein is Glutamate-1-semialdehyde 2,1-aminomutase.